The chain runs to 748 residues: Cytosolic phospholipase A2 (748 aa).

The phospholipid binding stretch occupies residues 1–178 (MSFIDPYQHI…MKKLLGPKKS (178 aa)). S2 carries the post-translational modification Phosphoserine. The 117-residue stretch at 6-122 (PYQHIIVEHQ…KVGEKKEVPF (117 aa)) folds into the C2 domain. Ca(2+) is bound by residues D40, T41, D43, N65, D93, A94, and N95. The 600-residue stretch at 140 to 739 (SCPDLRFSMA…SNVEARKFFN (600 aa)) folds into the PLA2c domain. Catalysis depends on S228, which acts as the Nucleophile. The residue at position 268 (T268) is a Phosphothreonine. The interval 427-458 (KHIVSNDSSDSDDEAQGPKGTENEEAEKEYQS) is disordered. 3 positions are modified to phosphoserine: S434, S435, and S437. S505 bears the Phosphoserine; by MAPK mark. S515 bears the Phosphoserine mark. Residue K540 forms a Glycyl lysine isopeptide (Lys-Gly) (interchain with G-Cter in SUMO2) linkage. Residue D548 is the Proton acceptor of the active site. K605 participates in a covalent cross-link: Glycyl lysine isopeptide (Lys-Gly) (interchain with G-Cter in SUMO2). Phosphoserine is present on residues S726 and S728.

In terms of assembly, interacts with KAT5. Phosphorylated at both Ser-505 and Ser-726 in response to mitogenic stimuli. As to expression, expressed in various organs including uterus, kidney, spleen, liver, heart, lung and brain (at protein level).

The protein localises to the cytoplasm. It localises to the golgi apparatus membrane. Its subcellular location is the nucleus envelope. The catalysed reaction is a 1,2-diacyl-sn-glycero-3-phosphocholine + H2O = a 1-acyl-sn-glycero-3-phosphocholine + a fatty acid + H(+). It carries out the reaction a 1-O-alkyl-2-acyl-sn-glycero-3-phosphocholine + H2O = a 1-O-alkyl-sn-glycero-3-phosphocholine + a fatty acid + H(+). It catalyses the reaction a 1-acyl-sn-glycero-3-phosphocholine + H2O = sn-glycerol 3-phosphocholine + a fatty acid + H(+). The enzyme catalyses 1-hexadecanoyl-2-(5Z,8Z,11Z,14Z-eicosatetraenoyl)-sn-glycero-3-phosphocholine + H2O = 1-hexadecanoyl-sn-glycero-3-phosphocholine + (5Z,8Z,11Z,14Z)-eicosatetraenoate + H(+). The catalysed reaction is 1,2-di-(5Z,8Z,11Z,14Z-eicosatetraenoyl)-sn-glycero-3-phosphocholine + H2O = 1-(5Z,8Z,11Z,14Z-eicosatetraenoyl)-sn-glycero-3-phosphocholine + (5Z,8Z,11Z,14Z)-eicosatetraenoate + H(+). It carries out the reaction 1-octadecanoyl-2-(5Z,8Z,11Z,14Z-eicosatetraenoyl)-sn-glycero-3-phosphocholine + H2O = 1-octadecanoyl-sn-glycero-3-phosphocholine + (5Z,8Z,11Z,14Z)-eicosatetraenoate + H(+). It catalyses the reaction 1-hexadecanoyl-2-(9Z,12Z-octadecadienoyl)-sn-glycero-3-phosphocholine + H2O = (9Z,12Z)-octadecadienoate + 1-hexadecanoyl-sn-glycero-3-phosphocholine + H(+). The enzyme catalyses 1-octadecanoyl-2-(9Z,12Z,15Z-octadecatrienoyl)-sn-glycero-3-phosphocholine + H2O = (9Z,12Z,15Z)-octadecatrienoate + 1-octadecanoyl-sn-glycero-3-phosphocholine + H(+). The catalysed reaction is 1-(5Z,8Z,11Z,14Z-eicosatetraenoyl)-2-hexadecanoyl-sn-glycero-3-phosphocholine + H2O = 1-(5Z,8Z,11Z,14Z-eicosatetraenoyl)-sn-glycero-3-phosphocholine + hexadecanoate + H(+). It carries out the reaction 1-O-hexadecyl-2-(5Z,8Z,11Z,14Z)-eicosatetraenoyl-sn-glycero-3-phosphocholine + H2O = 1-O-hexadecyl-sn-glycero-3-phosphocholine + (5Z,8Z,11Z,14Z)-eicosatetraenoate + H(+). It catalyses the reaction 1,2-di-(9Z-octadecenoyl)-sn-glycero-3-phospho-(1'-sn-glycerol) + H2O = 1-(9Z-octadecenoyl)-sn-glycero-3-phospho-(1'-sn-glycerol) + (9Z)-octadecenoate + H(+). The enzyme catalyses 1-octadecanoyl-2-(5Z,8Z,11Z,14Z-eicosatetraenoyl)-sn-glycero-3-phosphate + H2O = 1-octadecanoyl-sn-glycero-3-phosphate + (5Z,8Z,11Z,14Z)-eicosatetraenoate + H(+). The catalysed reaction is 1-hexadecanoyl-sn-glycero-3-phosphocholine + H2O = sn-glycerol 3-phosphocholine + hexadecanoate + H(+). It carries out the reaction 2-(prostaglandin E2)-sn-glycero-3-phosphoethanolamine + H2O = sn-glycero-3-phosphoethanolamine + prostaglandin E2 + H(+). It catalyses the reaction 2-[(15S)-hydroxy-(5Z,8Z,11Z,13E)-eicosatetraenoyl]-sn-glycero-3-phosphocholine + H2O = (15S)-hydroxy-(5Z,8Z,11Z,13E)-eicosatetraenoate + sn-glycerol 3-phosphocholine + H(+). The enzyme catalyses 2-[(15R)-hydroxy-(5Z,8Z,11Z,13E)-eicosatetraenoyl]-sn-glycero-3-phosphocholine + H2O = (15R)-hydroxy-(5Z,8Z,11Z,13E)-eicosatetraenoate + sn-glycerol 3-phosphocholine + H(+). The catalysed reaction is 2-(prostaglandin E2)-sn-glycero-3-phosphocholine + H2O = prostaglandin E2 + sn-glycerol 3-phosphocholine + H(+). It carries out the reaction 2-[(11R)-hydroxy-(5Z,8Z,12E,14Z)-eicosatetraenoyl]-sn-glycero-3-phosphocholine + H2O = (11R)-hydroxy-(5Z,8Z,12E,14Z)-eicosatetraenoate + sn-glycerol 3-phosphocholine + H(+). It catalyses the reaction 1-(5Z,8Z,11Z,14Z-eicosatetraenoyl)-2-O-hexadecyl-sn-glycero-3-phosphocholine + H2O = 2-O-hexadecyl-sn-glycero-3-phosphocholine + (5Z,8Z,11Z,14Z)-eicosatetraenoate + H(+). The enzyme catalyses 1-octadecanoyl-2-(5Z,8Z,11Z,14Z-eicosatetraenoyl)-sn-glycero-3-phosphocholine + glycerol = 1-(5Z,8Z,11Z,14Z-eicosatetraenoyl)-glycerol + 1-octadecanoyl-sn-glycero-3-phosphocholine. The catalysed reaction is 1-octadecanoyl-2-(9Z,12Z,15Z-octadecatrienoyl)-sn-glycero-3-phosphocholine + glycerol = 1-(9Z,12Z,15Z-octadecatrienoyl)-glycerol + 1-octadecanoyl-sn-glycero-3-phosphocholine. The protein operates within membrane lipid metabolism; glycerophospholipid metabolism. Its pathway is lipid metabolism; arachidonate metabolism. It functions in the pathway lipid metabolism; prostaglandin biosynthesis. It participates in lipid metabolism; leukotriene B4 biosynthesis. Its activity is regulated as follows. Activated by cytosolic calcium, which is necessary for binding to membrane lipids. Activated by phosphorylation in response to mitogenic stimuli. Stimulated by agonists such as ATP and thrombin. Its function is as follows. Has primarily calcium-dependent phospholipase and lysophospholipase activities, with a major role in membrane lipid remodeling and biosynthesis of lipid mediators of the inflammatory response. Plays an important role in embryo implantation and parturition through its ability to trigger prostanoid production. Preferentially hydrolyzes the ester bond of the fatty acyl group attached at sn-2 position of phospholipids (phospholipase A2 activity). Selectively hydrolyzes sn-2 arachidonoyl group from membrane phospholipids, providing the precursor for eicosanoid biosynthesis via the cyclooxygenase pathway. In an alternative pathway of eicosanoid biosynthesis, hydrolyzes sn-2 fatty acyl chain of eicosanoid lysophopholipids to release free bioactive eicosanoids. Hydrolyzes the ester bond of the fatty acyl group attached at sn-1 position of phospholipids (phospholipase A1 activity) only if an ether linkage rather than an ester linkage is present at the sn-2 position. This hydrolysis is not stereospecific. Has calcium-independent phospholipase A2 and lysophospholipase activities in the presence of phosphoinositides. Has O-acyltransferase activity. Catalyzes the transfer of fatty acyl chains from phospholipids to a primary hydroxyl group of glycerol (sn-1 or sn-3), potentially contributing to monoacylglycerol synthesis. This chain is Cytosolic phospholipase A2 (Pla2g4a), found in Mus musculus (Mouse).